The chain runs to 222 residues: Ras-related protein Rab11C (222 aa).

Residue 22-29 (GDSAVGKT) participates in GTP binding. The Effector region motif lies at 44–52 (SKATIGVEF). GTP is bound by residues 70-74 (DTAGQ) and 128-131 (NKTD). S-geranylgeranyl cysteine attachment occurs at residues Cys-219 and Cys-220.

Belongs to the small GTPase superfamily. Rab family.

The protein resides in the cell membrane. The sequence is that of Ras-related protein Rab11C (RAB11C) from Nicotiana tabacum (Common tobacco).